Consider the following 145-residue polypeptide: Peptide methionine sulfoxide reductase MsrB (145 aa).

Positions 6–129 (KNERLKQLTD…NSAALRFIPV (124 aa)) constitute a MsrB domain. Residue C118 is the Nucleophile of the active site.

It belongs to the MsrB Met sulfoxide reductase family.

It carries out the reaction L-methionyl-[protein] + [thioredoxin]-disulfide + H2O = L-methionyl-(R)-S-oxide-[protein] + [thioredoxin]-dithiol. In Listeria innocua serovar 6a (strain ATCC BAA-680 / CLIP 11262), this protein is Peptide methionine sulfoxide reductase MsrB.